The chain runs to 424 residues: Cytoplasmic tRNA 2-thiolation protein 2 (424 aa).

A disordered region spans residues 357-385 (PAAPETEEEEELSKKAHMEKSQEKTGDAD). Over residues 368-385 (LSKKAHMEKSQEKTGDAD) the composition is skewed to basic and acidic residues.

The protein belongs to the CTU2/NCS2 family.

It is found in the cytoplasm. The protein operates within tRNA modification; 5-methoxycarbonylmethyl-2-thiouridine-tRNA biosynthesis. Functionally, plays a central role in 2-thiolation of mcm(5)S(2)U at tRNA wobble positions of tRNA(Lys), tRNA(Glu) and tRNA(Gln). May act by forming a heterodimer with NCS6 that ligates sulfur from thiocarboxylated URM1 onto the uridine of tRNAs at wobble position. Prior mcm(5) tRNA modification by the elongator complex is required for 2-thiolation. May also be involved in protein urmylation. This Yarrowia lipolytica (strain CLIB 122 / E 150) (Yeast) protein is Cytoplasmic tRNA 2-thiolation protein 2.